The following is a 372-amino-acid chain: Mannan endo-1,4-beta-mannosidase 8 (372 aa).

2 residues coordinate substrate: W57 and N172. The Proton donor role is filled by E173. Substrate is bound at residue Y253. Residue E293 is the Nucleophile of the active site. A substrate-binding site is contributed by W335.

Belongs to the glycosyl hydrolase 5 (cellulase A) family. Expressed in stems and leaves and seeds.

It catalyses the reaction Random hydrolysis of (1-&gt;4)-beta-D-mannosidic linkages in mannans, galactomannans and glucomannans.. The polypeptide is Mannan endo-1,4-beta-mannosidase 8 (MAN8) (Oryza sativa subsp. japonica (Rice)).